The primary structure comprises 204 residues: Protein GrpE (204 aa).

The interval 1–42 (MTDETAKNGPDAAADAQIEPQVQEETNSTAEDAGQDNNPTAA) is disordered. Residues 23 to 41 (QEETNSTAEDAGQDNNPTA) are compositionally biased toward polar residues.

It belongs to the GrpE family. Homodimer.

It localises to the cytoplasm. Its function is as follows. Participates actively in the response to hyperosmotic and heat shock by preventing the aggregation of stress-denatured proteins, in association with DnaK and GrpE. It is the nucleotide exchange factor for DnaK and may function as a thermosensor. Unfolded proteins bind initially to DnaJ; upon interaction with the DnaJ-bound protein, DnaK hydrolyzes its bound ATP, resulting in the formation of a stable complex. GrpE releases ADP from DnaK; ATP binding to DnaK triggers the release of the substrate protein, thus completing the reaction cycle. Several rounds of ATP-dependent interactions between DnaJ, DnaK and GrpE are required for fully efficient folding. This chain is Protein GrpE, found in Allorhizobium ampelinum (strain ATCC BAA-846 / DSM 112012 / S4) (Agrobacterium vitis (strain S4)).